Here is a 56-residue protein sequence, read N- to C-terminus: Small ribosomal subunit protein uS14 (56 aa).

Zn(2+)-binding residues include C21, C24, C39, and C42.

Belongs to the universal ribosomal protein uS14 family. Component of the 40S small ribosomal subunit. Zn(2+) serves as cofactor.

It localises to the cytoplasm. It is found in the cytosol. The protein resides in the rough endoplasmic reticulum. In Scarabaeus laticollis (Scarab dung beetle), this protein is Small ribosomal subunit protein uS14 (RpS29).